A 156-amino-acid chain; its full sequence is MKIIFFFALLAIAACSASAQFDAVTQVYRQYQLQPHLMLQQQMLSPCGEFVRQQCSTVATPFFQSPVFQLRNCQVMQQQCCQQLRMIAQQSHCQAISSVQAIVQQLRLQQFASVYFDQSQAQAQAMLALNMPSICGIYPSYNTAPCSIPTVGGIWY.

A signal peptide spans methionine 1–alanine 19. A Pyrrolidone carboxylic acid modification is found at glutamine 20.

It belongs to the prolamin family.

The protein localises to the vacuole. It is found in the aleurone grain. Functionally, seed storage protein; serves as a source of nitrogen, carbon and sulfur for the young developing seedling. The polypeptide is Prolamin PPROL 17D (Oryza sativa subsp. japonica (Rice)).